A 963-amino-acid polypeptide reads, in one-letter code: Phosphoenolpyruvate carboxylase 2 (963 aa).

At serine 11 the chain carries Phosphoserine. Active-site residues include histidine 172 and lysine 599. Phosphoserine is present on serine 701.

The protein belongs to the PEPCase type 1 family. As to quaternary structure, homotetramer. Mg(2+) is required as a cofactor. Expressed in all plant organs, with higher levels in stems and leaves.

The protein resides in the cytoplasm. The catalysed reaction is oxaloacetate + phosphate = phosphoenolpyruvate + hydrogencarbonate. By light-reversible phosphorylation. Through the carboxylation of phosphoenolpyruvate (PEP) it forms oxaloacetate, a four-carbon dicarboxylic acid source for the tricarboxylic acid cycle. This Arabidopsis thaliana (Mouse-ear cress) protein is Phosphoenolpyruvate carboxylase 2 (PPC2).